The sequence spans 427 residues: 3-phosphoshikimate 1-carboxyvinyltransferase (427 aa).

Residues Lys27, Ser28, and Arg32 each coordinate 3-phosphoshikimate. Lys27 is a phosphoenolpyruvate binding site. Positions 95 and 123 each coordinate phosphoenolpyruvate. 6 residues coordinate 3-phosphoshikimate: Ser166, Ser167, Gln168, Ser192, Asp305, and Lys332. Gln168 provides a ligand contact to phosphoenolpyruvate. Asp305 (proton acceptor) is an active-site residue. Phosphoenolpyruvate-binding residues include Arg336 and Arg377.

This sequence belongs to the EPSP synthase family. In terms of assembly, monomer.

It localises to the cytoplasm. It carries out the reaction 3-phosphoshikimate + phosphoenolpyruvate = 5-O-(1-carboxyvinyl)-3-phosphoshikimate + phosphate. Its pathway is metabolic intermediate biosynthesis; chorismate biosynthesis. Its function is as follows. Catalyzes the transfer of the enolpyruvyl moiety of phosphoenolpyruvate (PEP) to the 5-hydroxyl of shikimate-3-phosphate (S3P) to produce enolpyruvyl shikimate-3-phosphate and inorganic phosphate. This Aeropyrum pernix (strain ATCC 700893 / DSM 11879 / JCM 9820 / NBRC 100138 / K1) protein is 3-phosphoshikimate 1-carboxyvinyltransferase.